A 365-amino-acid chain; its full sequence is Fatty acid hydroxylase vlmA (365 aa).

A disordered region spans residues 20–41; that stretch reads TTIKRRQNDKTKTPKTKPVSKI. N-linked (GlcNAc...) asparagine glycosylation is present at N47. 4 helical membrane-spanning segments follow: residues 62–82, 89–109, 144–164, and 179–199; these read ILLQ…VLSI, VHPF…FRFL, LNWS…LVAY, and WWAW…FYYY. The region spanning 189–335 is the Fatty acid hydroxylase domain; it reads LYPIILDFYY…TRIWDRLFGT (147 aa).

This sequence belongs to the sterol desaturase family. TMEM195 subfamily.

Its subcellular location is the membrane. Its pathway is secondary metabolite biosynthesis. In terms of biological role, fatty acid hydroxylase; part of the gene cluster that mediates the biosynthesis of verlamelin, a lipopeptide that exhibits antifungal activity against plant pathogenic fungi. Verlamelin is a cyclic hexadepsipeptide and is bridged by ester bonding between a 5-hydroxytetradecanoic acid moiety and a carboxyl group on the terminal Val of amide-bonded tetradecanoyl-hexapeptide D-allo-Thr-D-Ala-L-Pro-L-Gln-D-Tyr-L-Val. VlmA and vlmB are altogether regarded as essential components in the biosynthesis of 5-hydroxytetradecanoic acid. VlmA catalyzes the hydroxylation at position C5 of tetradecanoic acid produced in primary metabolism, while the precise function of vlmB still remains to be solved. To be loaded onto the waiting NRPS, 5-hydroxytetradecanoic acid is activated in the form of acyladenylate by the AMP-dependent ligase vlmC. VlmS seems to accept the fatty-acyl intermediate onto the initial module to further elongate amino acid residues by the downstream modules. In addition, in the last module at its C-terminus, vlmS contains a surplus condensation (C) domain that may be involved in cyclization, the last step to form verlamelin. This Lecanicillium sp protein is Fatty acid hydroxylase vlmA.